The chain runs to 159 residues: Transcriptional repressor NrdR (159 aa).

The segment at 1 to 22 is disordered; that stretch reads MRCPFCGSEDTQVKDSRPAEDN. A zinc finger spans residues 3 to 34; it reads CPFCGSEDTQVKDSRPAEDNTSIRRRRICPDC. Over residues 11-22 the composition is skewed to basic and acidic residues; that stretch reads TQVKDSRPAEDN. Residues 49 to 139 enclose the ATP-cone domain; it reads LMVIKKSGRK…VYRDFSHAED (91 aa).

This sequence belongs to the NrdR family. The cofactor is Zn(2+).

Negatively regulates transcription of bacterial ribonucleotide reductase nrd genes and operons by binding to NrdR-boxes. This is Transcriptional repressor NrdR from Agrobacterium fabrum (strain C58 / ATCC 33970) (Agrobacterium tumefaciens (strain C58)).